A 334-amino-acid polypeptide reads, in one-letter code: Adenosine deaminase (334 aa).

Zn(2+) contacts are provided by His-12 and His-14. Substrate-binding residues include His-14, Asp-16, and Gly-170. A Zn(2+)-binding site is contributed by His-197. Residue Glu-200 is the Proton donor of the active site. A Zn(2+)-binding site is contributed by Asp-278. Asp-279 is a binding site for substrate.

The protein belongs to the metallo-dependent hydrolases superfamily. Adenosine and AMP deaminases family. Adenosine deaminase subfamily. The cofactor is Zn(2+).

The catalysed reaction is adenosine + H2O + H(+) = inosine + NH4(+). It carries out the reaction 2'-deoxyadenosine + H2O + H(+) = 2'-deoxyinosine + NH4(+). Functionally, catalyzes the hydrolytic deamination of adenosine and 2-deoxyadenosine. The chain is Adenosine deaminase from Yersinia pseudotuberculosis serotype IB (strain PB1/+).